We begin with the raw amino-acid sequence, 393 residues long: Bifunctional enzyme Fae/Hps (393 aa).

Residues 1-161 (MYLIGEALIG…HEKDRAAHAV (161 aa)) form a formaldehyde-activating enzyme region. The Proton donor role is filled by His-17. Residues Asp-19, Leu-48, Lys-66, Thr-68, and Gln-83 each coordinate substrate. A 3-hexulose-6-phosphate synthase region spans residues 162-393 (MGFKVPRLWD…IDQFRIMTDF (232 aa)).

It in the N-terminal section; belongs to the formaldehyde-activating enzyme family. In the C-terminal section; belongs to the HPS/KGPDC family. HPS subfamily.

The catalysed reaction is 5,6,7,8-tetrahydromethanopterin + formaldehyde = 5,10-methylenetetrahydromethanopterin + H2O. The enzyme catalyses D-ribulose 5-phosphate + formaldehyde = D-arabino-hex-3-ulose 6-phosphate. Its pathway is carbohydrate biosynthesis; D-ribose 5-phosphate biosynthesis. In terms of biological role, catalyzes the condensation of formaldehyde with tetrahydromethanopterin (H(4)MPT) to 5,10-methylenetetrahydromethanopterin. Functionally, catalyzes the reversible formation of ribulose-5-phosphate and formaldehyde from 3-hexulose-6-phosphate. This Methanospirillum hungatei JF-1 (strain ATCC 27890 / DSM 864 / NBRC 100397 / JF-1) protein is Bifunctional enzyme Fae/Hps.